Reading from the N-terminus, the 148-residue chain is Small ribosomal subunit protein uS13 (148 aa).

The protein belongs to the universal ribosomal protein uS13 family. Part of the 30S ribosomal subunit. Forms a loose heterodimer with protein S19. Forms two bridges to the 50S subunit in the 70S ribosome.

In terms of biological role, located at the top of the head of the 30S subunit, it contacts several helices of the 16S rRNA. In the 70S ribosome it contacts the 23S rRNA (bridge B1a) and protein L5 of the 50S subunit (bridge B1b), connecting the 2 subunits; these bridges are implicated in subunit movement. In Pyrococcus horikoshii (strain ATCC 700860 / DSM 12428 / JCM 9974 / NBRC 100139 / OT-3), this protein is Small ribosomal subunit protein uS13.